Here is a 535-residue protein sequence, read N- to C-terminus: Pyrichalasin C-18 hydroxylase (535 aa).

Residues 42–62 (LPSGTLIVLAALSLALLVAVL) form a helical membrane-spanning segment. N-linked (GlcNAc...) asparagine glycans are attached at residues asparagine 139 and asparagine 222. Cysteine 479 is a binding site for heme.

The protein belongs to the cytochrome P450 family. Heme is required as a cofactor.

The protein localises to the membrane. It participates in mycotoxin biosynthesis. In terms of biological role, cytochrome P450 monooxygenase; part of the gene cluster that mediates the biosynthesis of the mycotoxin pyrichalasin H, a tyrosine-derived cytochalasan that inhibits the growth of rice seedlings, but also inhibits lymphocyte capping and actin polymerization and alters cell morphology. Pyrichalasin H is indicated as the responsible agent for the genus-specific pathogenicity of M.grisea toward crabgrass. The first step in the pathway is catalyzed by the O-methyltransferase pyiA which methylates free tyrosine to generate the precursor O-methyltyrosine. The hybrid PKS-NRPS pyiS, assisted by the enoyl reductase pyiC, are responsible for fusion of the O-methyltyrosine precursor and the polyketide backbone. The polyketide synthase module (PKS) of pyiS is responsible for the synthesis of the polyketide backbone and the downstream nonribosomal peptide synthetase (NRPS) amidates the carboxyl end of the polyketide with the O-methyltyrosine precursor. As the NRPS A-domain demonstrates substrate tolerance, pyiS can also use phenylalanine, tyrosine and even para-chlorophenylalanine as amino acid precursor, which leads to the production of novel cytochalasans, including halogenated cytochalasans. Because pyiS lacks a designated enoylreductase (ER) domain, the required activity is provided the enoyl reductase pyiC. Reduction by the hydrolyase pyiE leads to 1,5-dihydropyrrolone, which is substrate for dehydration and intra-molecular Diels-Alder cyclization by the Diels-Alderase pyiF to yield the required isoindolone-fused macrocycle. The tailoring cytochrome P450 monooxygenases piyD and piyG catalyze the hydroxylation at C-18 and C-7, respectivily, whereas the short-chain dehydrogenase/reductase pyiH reduces the carbonyl at C-21 in preparation for the transfer of an acetyl group by the acetyltransferase pyiB. These 3 reactions whose order is not clear yet, lead to the production of O-methylpyrichalasin J, a deacetylated pyrichalasin H. Finally, pyiB to converts O-methylpyrichalasin J into the final product pyrichalasin H via acetylation of C-21. This is Pyrichalasin C-18 hydroxylase from Pyricularia grisea (Crabgrass-specific blast fungus).